The following is a 179-amino-acid chain: Ribulose bisphosphate carboxylase small subunit, chloroplastic 2 (179 aa).

A chloroplast-targeting transit peptide spans 1–58 (MASSATMLSSVATAACVAPAQASMVAPFVGLKSASAFPVTQKTVTGLSTLPSNGGRVQ).

This sequence belongs to the RuBisCO small chain family. In terms of assembly, heterohexadecamer of 8 large and 8 small subunits.

The protein resides in the plastid. It is found in the chloroplast. Its function is as follows. RuBisCO catalyzes two reactions: the carboxylation of D-ribulose 1,5-bisphosphate, the primary event in carbon dioxide fixation, as well as the oxidative fragmentation of the pentose substrate. Both reactions occur simultaneously and in competition at the same active site. Although the small subunit is not catalytic it is essential for maximal activity. The chain is Ribulose bisphosphate carboxylase small subunit, chloroplastic 2 from Fritillaria agrestis (Stinkbells).